The sequence spans 67 residues: Conotoxin mr3d (67 aa).

An N-terminal signal peptide occupies residues 1-19; sequence MSKLGILLTICLLLFPLTA. Positions 20-52 are excised as a propeptide; the sequence is VPLDGDQPADRPAERMQDDISSEHHPFFDPVKR. Intrachain disulfides connect Cys53/Cys65, Cys54/Cys62, and Cys58/Cys66. Residue Pro64 is modified to 4-hydroxyproline; partial. Position 66 is a cysteine amide; partial (Cys66).

It belongs to the conotoxin M superfamily. Has been found to be hydroxylated and amidated by Han et al. (2006), and to be unmodified by Ju et al. (2022). Expressed by the venom duct.

It localises to the secreted. This is Conotoxin mr3d from Conus marmoreus (Marble cone).